The primary structure comprises 513 residues: Alanine--glyoxylate aminotransferase 2, mitochondrial (513 aa).

A mitochondrion-targeting transit peptide spans 1–40 (MSLAWRNLQKPFYLETSLRILQMRPSLSLGASRIAVPKLT). K56 bears the N6-acetyllysine mark. K70 is modified (N6-acetyllysine; alternate). K70 is subject to N6-succinyllysine; alternate. At K83 the chain carries N6-acetyllysine. Residue K261 is modified to N6-acetyllysine; alternate. K261 carries the post-translational modification N6-succinyllysine; alternate. The residue at position 303 (K303) is an N6-succinyllysine. K349 is modified (N6-(pyridoxal phosphate)lysine). N6-acetyllysine; alternate is present on residues K416 and K419. N6-succinyllysine; alternate occurs at positions 416 and 419. N6-acetyllysine is present on K453.

Belongs to the class-III pyridoxal-phosphate-dependent aminotransferase family. As to quaternary structure, homotetramer. It depends on pyridoxal 5'-phosphate as a cofactor. In terms of tissue distribution, expressed in the liver and kidney.

Its subcellular location is the mitochondrion. It catalyses the reaction glyoxylate + L-alanine = glycine + pyruvate. It carries out the reaction (R)-3-amino-2-methylpropanoate + pyruvate = 2-methyl-3-oxopropanoate + L-alanine. The catalysed reaction is 3-oxopropanoate + L-alanine = beta-alanine + pyruvate. The enzyme catalyses 2-oxobutanoate + L-alanine = (2S)-2-aminobutanoate + pyruvate. It catalyses the reaction N(omega),N(omega)-dimethyl-L-arginine + pyruvate = 5-(3,3-dimethylguanidino)-2-oxopentanoate + L-alanine. It carries out the reaction N(omega),N('omega)-dimethyl-L-arginine + pyruvate = 5-(3,3'-dimethylguanidino)-2-oxopentanoate + L-alanine. The catalysed reaction is N(omega),N(omega)-dimethyl-L-arginine + glyoxylate = 5-(3,3-dimethylguanidino)-2-oxopentanoate + glycine. The enzyme catalyses N(omega),N('omega)-dimethyl-L-arginine + glyoxylate = 5-(3,3'-dimethylguanidino)-2-oxopentanoate + glycine. It catalyses the reaction N(omega)-methyl-L-arginine + pyruvate = 5-(3-methylguanidino)-2-oxopentanoate + L-alanine. It carries out the reaction N(omega)-methyl-L-arginine + glyoxylate = 5-(3-methylguanidino)-2-oxopentanoate + glycine. The catalysed reaction is L-ornithine + pyruvate = 5-amino-2-oxopentanoate + L-alanine. The enzyme catalyses L-ornithine + glyoxylate = 5-amino-2-oxopentanoate + glycine. It catalyses the reaction (2S)-2-aminobutanoate + glyoxylate = 2-oxobutanoate + glycine. It carries out the reaction N(omega),N(omega)-dimethyl-L-arginine + oxaloacetate = 5-(3,3-dimethylguanidino)-2-oxopentanoate + L-aspartate. The catalysed reaction is oxaloacetate + L-alanine = L-aspartate + pyruvate. The enzyme catalyses N(omega),N(omega)-dimethyl-L-arginine + 2-oxobutanoate = 5-(3,3-dimethylguanidino)-2-oxopentanoate + (2S)-2-aminobutanoate. It catalyses the reaction 2-oxopentanoate + N(omega),N(omega)-dimethyl-L-arginine = 5-(3,3-dimethylguanidino)-2-oxopentanoate + L-2-aminopentanoate. It carries out the reaction 2-oxohexanoate + N(omega),N(omega)-dimethyl-L-arginine = L-2-aminohexanoate + 5-(3,3-dimethylguanidino)-2-oxopentanoate. (R)-3-amino-2-methylpropionate--pyruvate transaminase and beta-alanine-pyruvate aminotransferase are inhibited by aminooxyacetic acid. Functionally, multifunctional aminotransferase with a broad substrate specificity. Catalyzes the conversion of glyoxylate to glycine using alanine as the amino donor. Catalyzes metabolism of not L- but the D-isomer of D-beta-aminoisobutyric acid to generate 2-methyl-3-oxopropanoate and alanine. Catalyzes the transfer of the amino group from beta-alanine to pyruvate to yield L-alanine and 3-oxopropanoate. Can metabolize NG-monomethyl-L-arginine (NMMA), asymmetric NG,NG-dimethyl-L-arginine (ADMA) and symmetric NG,N'G-dimethyl-L-arginine (SDMA). ADMA is a potent inhibitor of nitric-oxide (NO) synthase, and this activity provides mechanism through which the kidney regulates blood pressure. The polypeptide is Alanine--glyoxylate aminotransferase 2, mitochondrial (Agxt2) (Mus musculus (Mouse)).